A 289-amino-acid polypeptide reads, in one-letter code: Glycine--tRNA ligase alpha subunit (289 aa).

The protein belongs to the class-II aminoacyl-tRNA synthetase family. As to quaternary structure, tetramer of two alpha and two beta subunits.

The protein resides in the cytoplasm. It carries out the reaction tRNA(Gly) + glycine + ATP = glycyl-tRNA(Gly) + AMP + diphosphate. The sequence is that of Glycine--tRNA ligase alpha subunit from Nitratidesulfovibrio vulgaris (strain ATCC 29579 / DSM 644 / CCUG 34227 / NCIMB 8303 / VKM B-1760 / Hildenborough) (Desulfovibrio vulgaris).